A 553-amino-acid chain; its full sequence is Dihydroxy-acid dehydratase (553 aa).

D78 is a Mg(2+) binding site. C119 provides a ligand contact to [2Fe-2S] cluster. D120 and K121 together coordinate Mg(2+). K121 bears the N6-carboxylysine mark. C192 is a [2Fe-2S] cluster binding site. Residue E442 coordinates Mg(2+). Residue S468 is the Proton acceptor of the active site.

Belongs to the IlvD/Edd family. Homodimer. [2Fe-2S] cluster is required as a cofactor. Mg(2+) serves as cofactor.

The catalysed reaction is (2R)-2,3-dihydroxy-3-methylbutanoate = 3-methyl-2-oxobutanoate + H2O. The enzyme catalyses (2R,3R)-2,3-dihydroxy-3-methylpentanoate = (S)-3-methyl-2-oxopentanoate + H2O. It participates in amino-acid biosynthesis; L-isoleucine biosynthesis; L-isoleucine from 2-oxobutanoate: step 3/4. It functions in the pathway amino-acid biosynthesis; L-valine biosynthesis; L-valine from pyruvate: step 3/4. In terms of biological role, functions in the biosynthesis of branched-chain amino acids. Catalyzes the dehydration of (2R,3R)-2,3-dihydroxy-3-methylpentanoate (2,3-dihydroxy-3-methylvalerate) into 2-oxo-3-methylpentanoate (2-oxo-3-methylvalerate) and of (2R)-2,3-dihydroxy-3-methylbutanoate (2,3-dihydroxyisovalerate) into 2-oxo-3-methylbutanoate (2-oxoisovalerate), the penultimate precursor to L-isoleucine and L-valine, respectively. The sequence is that of Dihydroxy-acid dehydratase from Campylobacter hominis (strain ATCC BAA-381 / DSM 21671 / CCUG 45161 / LMG 19568 / NCTC 13146 / CH001A).